Consider the following 493-residue polypeptide: UDP-N-acetylmuramate--L-alanine ligase (493 aa).

Residue 112–118 coordinates ATP; it reads GTHGKTT.

Belongs to the MurCDEF family.

It localises to the cytoplasm. The enzyme catalyses UDP-N-acetyl-alpha-D-muramate + L-alanine + ATP = UDP-N-acetyl-alpha-D-muramoyl-L-alanine + ADP + phosphate + H(+). It participates in cell wall biogenesis; peptidoglycan biosynthesis. Cell wall formation. The polypeptide is UDP-N-acetylmuramate--L-alanine ligase (Nitrosospira multiformis (strain ATCC 25196 / NCIMB 11849 / C 71)).